The sequence spans 207 residues: Mediator of RNA polymerase II transcription subunit 21 (207 aa).

The tract at residues Pro-37–Arg-121 is disordered. Positions Pro-65 to Ala-80 are enriched in low complexity. The segment covering Ala-84–Thr-96 has biased composition (gly residues). The segment covering Pro-97–Asn-108 has biased composition (low complexity). Positions Ile-146–Leu-196 form a coiled coil.

This sequence belongs to the Mediator complex subunit 21 family. Component of the Mediator complex.

It localises to the nucleus. Functionally, component of the Mediator complex, a coactivator involved in the regulated transcription of nearly all RNA polymerase II-dependent genes. Mediator functions as a bridge to convey information from gene-specific regulatory proteins to the basal RNA polymerase II transcription machinery. Mediator is recruited to promoters by direct interactions with regulatory proteins and serves as a scaffold for the assembly of a functional preinitiation complex with RNA polymerase II and the general transcription factors. This is Mediator of RNA polymerase II transcription subunit 21 (srb7) from Neosartorya fischeri (strain ATCC 1020 / DSM 3700 / CBS 544.65 / FGSC A1164 / JCM 1740 / NRRL 181 / WB 181) (Aspergillus fischerianus).